A 341-amino-acid polypeptide reads, in one-letter code: DNA-directed RNA polymerase subunit alpha (341 aa).

Residues 1–233 (MIRDEIPISA…NLFIPFLHAE (233 aa)) form an alpha N-terminal domain (alpha-NTD) region. The interval 265–341 (TKGVTFKHIF…NLPKNKLHFH (77 aa)) is alpha C-terminal domain (alpha-CTD).

The protein belongs to the RNA polymerase alpha chain family. In plastids the minimal PEP RNA polymerase catalytic core is composed of four subunits: alpha, beta, beta', and beta''. When a (nuclear-encoded) sigma factor is associated with the core the holoenzyme is formed, which can initiate transcription.

It localises to the plastid. The protein resides in the chloroplast. The enzyme catalyses RNA(n) + a ribonucleoside 5'-triphosphate = RNA(n+1) + diphosphate. DNA-dependent RNA polymerase catalyzes the transcription of DNA into RNA using the four ribonucleoside triphosphates as substrates. The chain is DNA-directed RNA polymerase subunit alpha from Takakia lepidozioides (Moss).